Reading from the N-terminus, the 439-residue chain is Serine/threonine-protein kinase 2 (439 aa).

In terms of domain architecture, Protein kinase spans 87-439 (NDDFYHISTG…IFSDWINGRN (353 aa)). ATP-binding positions include 93 to 101 (ISTGGYGIV) and Lys-117. Asp-307 (proton acceptor) is an active-site residue.

The protein belongs to the protein kinase superfamily. Ser/Thr protein kinase family. In terms of processing, phosphorylated in vivo. Autophosphorylated in vitro.

The protein localises to the host endoplasmic reticulum. It localises to the host endoplasmic reticulum-Golgi intermediate compartment. It catalyses the reaction L-seryl-[protein] + ATP = O-phospho-L-seryl-[protein] + ADP + H(+). The catalysed reaction is L-threonyl-[protein] + ATP = O-phospho-L-threonyl-[protein] + ADP + H(+). Essential serine-protein kinase involved in the early stage of virion morphogenesis. This chain is Serine/threonine-protein kinase 2 (OPG054), found in Monkeypox virus.